A 100-amino-acid chain; its full sequence is Ubiquitin-related modifier 1 (100 aa).

Gly-100 carries the 1-thioglycine modification. Gly-100 is covalently cross-linked (Glycyl lysine isopeptide (Gly-Lys) (interchain with K-? in acceptor proteins)).

The protein belongs to the URM1 family. Post-translationally, C-terminal thiocarboxylation occurs in 2 steps, it is first acyl-adenylated (-COAMP) via the hesA/moeB/thiF part of UBA4, then thiocarboxylated (-COSH) via the rhodanese domain of UBA4.

It localises to the cytoplasm. It participates in tRNA modification; 5-methoxycarbonylmethyl-2-thiouridine-tRNA biosynthesis. Functionally, acts as a sulfur carrier required for 2-thiolation of mcm(5)S(2)U at tRNA wobble positions of cytosolic tRNA(Lys), tRNA(Glu) and tRNA(Gln). Serves as sulfur donor in tRNA 2-thiolation reaction by being thiocarboxylated (-COSH) at its C-terminus by the MOCS3 homolog UBA4. The sulfur is then transferred to tRNA to form 2-thiolation of mcm(5)S(2)U. Prior mcm(5) tRNA modification by the elongator complex is required for 2-thiolation. Also acts as a ubiquitin-like protein (UBL) that is covalently conjugated via an isopeptide bond to lysine residues of target proteins such as AHP1. The thiocarboxylated form serves as substrate for conjugation and oxidative stress specifically induces the formation of UBL-protein conjugates. The sequence is that of Ubiquitin-related modifier 1 from Eremothecium gossypii (strain ATCC 10895 / CBS 109.51 / FGSC 9923 / NRRL Y-1056) (Yeast).